The chain runs to 320 residues: MQTRNTFSWIREEITRSISVLLMIYIITWASISSAYPIFAQQNYENPREATGRIVCANCHLASKPVDIEVPQAVLPDTVFEAVVKIPYDMQLKQVLANGKKGALNVGAVLILPEGFELAPPDRISPEMKEKIGNLSFQNYRPNKKNILVIGPVPGQKYSEITFPILAPDPATNKDVHFLKYPIYVGGNRGRGQIYPDGSKSNNTVYNATAGGIINKILRKEKGGYEITIVDASNERQVIDIIPRGLELLVSEGESIKLDQPLTSNPNVGGFGQGDAEIVLQDPLRVQGLLFFLGSVVLAQIFLVLKKKQFEKVQLSEMNF.

Positions 1–35 (MQTRNTFSWIREEITRSISVLLMIYIITWASISSA) are cleaved as a signal peptide. Positions 36, 56, 59, and 60 each coordinate heme. A helical transmembrane segment spans residues 286 to 306 (VQGLLFFLGSVVLAQIFLVLK).

The protein belongs to the cytochrome f family. In terms of assembly, the 4 large subunits of the cytochrome b6-f complex are cytochrome b6, subunit IV (17 kDa polypeptide, petD), cytochrome f and the Rieske protein, while the 4 small subunits are PetG, PetL, PetM and PetN. The complex functions as a dimer. It depends on heme as a cofactor.

Its subcellular location is the plastid. The protein resides in the chloroplast thylakoid membrane. In terms of biological role, component of the cytochrome b6-f complex, which mediates electron transfer between photosystem II (PSII) and photosystem I (PSI), cyclic electron flow around PSI, and state transitions. The sequence is that of Cytochrome f from Lobularia maritima (Sweet alyssum).